Consider the following 609-residue polypeptide: Threonine--tRNA ligase (609 aa).

Residues 215-506 (DHRIIGNEMK…LIEHTAGELP (292 aa)) are catalytic. Zn(2+) is bound by residues C307, H358, and H483.

This sequence belongs to the class-II aminoacyl-tRNA synthetase family. Homodimer. It depends on Zn(2+) as a cofactor.

It localises to the cytoplasm. The enzyme catalyses tRNA(Thr) + L-threonine + ATP = L-threonyl-tRNA(Thr) + AMP + diphosphate + H(+). Functionally, catalyzes the attachment of threonine to tRNA(Thr) in a two-step reaction: L-threonine is first activated by ATP to form Thr-AMP and then transferred to the acceptor end of tRNA(Thr). Also edits incorrectly charged L-seryl-tRNA(Thr). The sequence is that of Threonine--tRNA ligase from Campylobacter hominis (strain ATCC BAA-381 / DSM 21671 / CCUG 45161 / LMG 19568 / NCTC 13146 / CH001A).